Reading from the N-terminus, the 5628-residue chain is Polyketide synthase ThaG (5628 aa).

In terms of domain architecture, Ketosynthase family 3 (KS3) 1 spans 13 to 448 (HDDIAVIGIA…GTNAHVVLRE (436 aa)). Catalysis depends on for beta-ketoacyl synthase 1 activity residues Cys184, His319, and His361. Disordered stretches follow at residues 552–613 (GNLV…DGPT) and 1156–1183 (ASPG…RAEA). The segment covering 559 to 589 (GPHDEQADHDGSGEHGEHGERARAGADDLSR) has biased composition (basic and acidic residues). A compositionally biased stretch (low complexity) spans 1156–1173 (ASPGAASSGAAAPNAASD). The segment covering 1174-1183 (ASRDTERAEA) has biased composition (basic and acidic residues). In terms of domain architecture, Carrier 1 spans 1209–1286 (AHGSARLPAL…RLAGHLATRL (78 aa)). Position 1246 is an O-(pantetheine 4'-phosphoryl)serine (Ser1246). Positions 1373-1781 (YEPIAIVGMS…GTNAHVIVEA (409 aa)) constitute a Ketosynthase family 3 (KS3) 2 domain. Residues Cys1529, His1664, and His1704 each act as for beta-ketoacyl synthase 2 activity in the active site. The tract at residues 1967-2099 (AREPGARERA…GVVDELNEPA (133 aa)) is N-terminal hotdog fold 1. The PKS/mFAS DH 1 domain occupies 1967–2261 (AREPGARERA…SARWRKLAGA (295 aa)). The active-site Proton acceptor; for dehydratase activity 1 is the His1999. The C-terminal hotdog fold 1 stretch occupies residues 2113–2261 (AGERVDGAAL…SARWRKLAGA (149 aa)). Asp2175 functions as the Proton donor; for dehydratase activity 1 in the catalytic mechanism. The interval 2426–2446 (DADEDDRDGREPAGGPPLRDD) is disordered. The Carrier 2 domain occupies 2702–2780 (PAARVDLHAL…AIARALDASA (79 aa)). The interval 2817–2836 (TPPDAGAPQRGAHAAAAEGS) is disordered. Residues 2822-2835 (GAPQRGAHAAAAEG) show a composition bias toward low complexity. Residues 2862-2935 (ARVGARLSAL…ELTDYFVRRH (74 aa)) form the Carrier 3 domain. Residue Ser2896 is modified to O-(pantetheine 4'-phosphoryl)serine. The Ketosynthase family 3 (KS3) 3 domain occupies 3005 to 3430 (ADAIAVIGLA…GANAHVIVRE (426 aa)). Active-site for beta-ketoacyl synthase 3 activity residues include Cys3175, His3310, and His3351. The segment at 3526–3546 (PGKKQLRGNGRARRGDAPPAG) is disordered. The interval 3621 to 3743 (HPMLDANRSE…GRSPSRAARG (123 aa)) is N-terminal hotdog fold 2. In terms of domain architecture, PKS/mFAS DH 2 spans 3621–3895 (HPMLDANRSE…SRAAASWRTA (275 aa)). His3650 (proton acceptor; for dehydratase activity 2) is an active-site residue. The C-terminal hotdog fold 2 stretch occupies residues 3758–3895 (RAAPAFDADA…SRAAASWRTA (138 aa)). Asp3818 functions as the Proton donor; for dehydratase activity 2 in the catalytic mechanism. The segment at 3917–3942 (PAAESPSAATSTSAATSPAISTSAAT) is disordered. The 75-residue stretch at 4840–4914 (TRTAALLRSL…ALAAYVGSQL (75 aa)) folds into the Carrier 4 domain. Position 4874 is an O-(pantetheine 4'-phosphoryl)serine (Ser4874). Residues 4960-4992 (APRARTGADAPDTSLASSASSISSARASSPASP) form a disordered region. A Ketosynthase family 3 (KS3) 4 domain is found at 4998 to 5424 (SFDVAIVGAS…GVNAHVVLEE (427 aa)). Active-site for beta-ketoacyl synthase 4 activity residues include Cys5158, His5293, and His5339. A Carrier 5 domain is found at 5470–5544 (ARIEAVIRDA…ALRDHVAERI (75 aa)). Ser5504 is modified (O-(pantetheine 4'-phosphoryl)serine). Residues 5573–5603 (VSEATEASDASEASDASEASEASEASEASKA) form a disordered region.

Pantetheine 4'-phosphate is required as a cofactor.

Its subcellular location is the cytoplasm. The protein operates within antibiotic biosynthesis. Functionally, involved in production of the polyketide antibiotic thailandamide. The sequence is that of Polyketide synthase ThaG from Burkholderia thailandensis (strain ATCC 700388 / DSM 13276 / CCUG 48851 / CIP 106301 / E264).